Reading from the N-terminus, the 494-residue chain is Probable serine/threonine-protein kinase BSK3 (494 aa).

A lipid anchor (N-myristoyl glycine) is attached at glycine 2. In terms of domain architecture, Protein kinase spans 61–316; that stretch reads ENIVSEHGEK…SLVQALAPLQ (256 aa). Residues 67–75 and lysine 89 each bind ATP; that span reads HGEKAPNVV. The active-site Proton acceptor is aspartate 183. A phosphoserine mark is found at serine 213 and serine 215. One copy of the TPR repeat lies at 423–456; sequence PTIYARRCLSYLMNDKAEQALSDAMQALVISPTW.

In terms of assembly, interacts with BRI1 and BSL1. In terms of processing, phosphorylated at Ser-213 and Ser-215 by BRI1. Phosphorylation at Ser-215 is required for its function in the regulation of brassinosteroid signaling. Phosphorylation by BRI1 disrupts the interaction between its TPR and kinase domains, thereby increasing the binding between its kinase domain and BSL1.

It is found in the cell membrane. The enzyme catalyses L-seryl-[protein] + ATP = O-phospho-L-seryl-[protein] + ADP + H(+). The catalysed reaction is L-threonyl-[protein] + ATP = O-phospho-L-threonyl-[protein] + ADP + H(+). Probable serine/threonine kinase that acts as a positive regulator of brassinosteroid (BR) signaling downstream of BRI1. The protein is Probable serine/threonine-protein kinase BSK3 of Oryza sativa subsp. japonica (Rice).